We begin with the raw amino-acid sequence, 75 residues long: Pro-glucagon (75 aa).

This sequence belongs to the glucagon family.

It is found in the secreted. In terms of biological role, plays a key role in glucose metabolism and homeostasis. Regulates blood glucose by increasing gluconeogenesis and decreasing glycolysis. This chain is Pro-glucagon (gcg), found in Amia calva (Bowfin).